The following is a 511-amino-acid chain: Maturase K (511 aa).

This sequence belongs to the intron maturase 2 family. MatK subfamily.

The protein localises to the plastid. It localises to the chloroplast. Its function is as follows. Usually encoded in the trnK tRNA gene intron. Probably assists in splicing its own and other chloroplast group II introns. This is Maturase K from Acorus calamus var. americanus (American sweet flag).